The sequence spans 309 residues: Ornithine carbamoyltransferase (309 aa).

Carbamoyl phosphate contacts are provided by residues 51–54, Gln-78, Arg-102, and 129–132; these read STRT and HPVQ. L-ornithine is bound by residues Asn-159, Asp-223, and 227–228; that span reads SM. Residues 263–264 and Arg-291 each bind carbamoyl phosphate; that span reads CL.

The protein belongs to the aspartate/ornithine carbamoyltransferase superfamily. OTCase family.

The protein resides in the cytoplasm. The catalysed reaction is carbamoyl phosphate + L-ornithine = L-citrulline + phosphate + H(+). It functions in the pathway amino-acid biosynthesis; L-arginine biosynthesis; L-arginine from L-ornithine and carbamoyl phosphate: step 1/3. Its function is as follows. Reversibly catalyzes the transfer of the carbamoyl group from carbamoyl phosphate (CP) to the N(epsilon) atom of ornithine (ORN) to produce L-citrulline. The sequence is that of Ornithine carbamoyltransferase from Nitratiruptor sp. (strain SB155-2).